The primary structure comprises 392 residues: Integrin-linked kinase-associated serine/threonine phosphatase 2C (392 aa).

N-acetylmethionine is present on M1. The segment at 1-91 (MDLFGDLPEP…PEEEKNGGEE (91 aa)) is disordered. Low complexity predominate over residues 31-40 (DLPPTSSTDS). Positions 59–70 (SGSLATSGSQVV) are enriched in polar residues. Positions 72-91 (NEGKGAKRKAPEEEKNGGEE) are enriched in basic and acidic residues. The PPM-type phosphatase domain maps to 108-390 (KGYVAERKGE…DNVTVMVVRI (283 aa)). Residues D152 and G153 each contribute to the Mn(2+) site. K210 carries the N6-acetyllysine modification. Positions 326 and 381 each coordinate Mn(2+).

It belongs to the PP2C family. In terms of assembly, interacts with ILK. The cofactor is Mg(2+). It depends on Mn(2+) as a cofactor. Widely expressed. Highest expression observed in kidney, liver and muscle.

Its subcellular location is the cytoplasm. It carries out the reaction O-phospho-L-seryl-[protein] + H2O = L-seryl-[protein] + phosphate. The catalysed reaction is O-phospho-L-threonyl-[protein] + H2O = L-threonyl-[protein] + phosphate. Protein phosphatase that may play a role in regulation of cell cycle progression via dephosphorylation of its substrates whose appropriate phosphorylation states might be crucial for cell proliferation. Selectively associates with integrin linked kinase (ILK), to modulate cell adhesion and growth factor signaling. Inhibits the ILK-GSK3B signaling axis and may play an important role in inhibiting oncogenic transformation. The protein is Integrin-linked kinase-associated serine/threonine phosphatase 2C (Ilkap) of Rattus norvegicus (Rat).